The following is a 491-amino-acid chain: Ran-binding protein 3-like (491 aa).

The region spanning 270–441 (TFKSVLKFPN…VALRSLAKQG (172 aa)) is the RanBD1 domain. The segment at 440-468 (QGDGGPAESQSDTALPQLNGESCDEDEDE) is disordered. Over residues 447-459 (ESQSDTALPQLNG) the composition is skewed to polar residues.

In terms of assembly, interacts with SMAD1, SMAD5 and SMAD8.

It is found in the nucleus. Its subcellular location is the cytoplasm. Functionally, nuclear export factor for BMP-specific SMAD1/5/8 that plays a critical role in terminating BMP signaling and regulating mesenchymal stem cell differentiation by blocking osteoblast differentiation to promote myogenic differention. Directly recognizes dephosphorylated SMAD1/5/8 and mediates their nuclear export in a Ran-dependent manner. This chain is Ran-binding protein 3-like (Ranbp3l), found in Mus musculus (Mouse).